The following is a 187-amino-acid chain: Hypoxanthine/guanine phosphoribosyltransferase (187 aa).

Belongs to the purine/pyrimidine phosphoribosyltransferase family. Archaeal HPRT subfamily. As to quaternary structure, homodimer.

It is found in the cytoplasm. It catalyses the reaction IMP + diphosphate = hypoxanthine + 5-phospho-alpha-D-ribose 1-diphosphate. It carries out the reaction GMP + diphosphate = guanine + 5-phospho-alpha-D-ribose 1-diphosphate. The protein operates within purine metabolism; IMP biosynthesis via salvage pathway; IMP from hypoxanthine: step 1/1. Functionally, catalyzes a salvage reaction resulting in the formation of IMP that is energically less costly than de novo synthesis. The protein is Hypoxanthine/guanine phosphoribosyltransferase of Methanocorpusculum labreanum (strain ATCC 43576 / DSM 4855 / Z).